Consider the following 2623-residue polypeptide: Probable polyketide synthase 31 (2623 aa).

Residues Met1 to Lys11 are compositionally biased toward low complexity. The disordered stretch occupies residues Met1–Asn25. Positions Asp27–Glu461 constitute a Ketosynthase family 3 (KS3) domain. Catalysis depends on for beta-ketoacyl synthase activity residues Cys199, His338, and His384. Residues Gly666–Tyr699 form an acyl/malonyl transferase region. The active-site For acyl/malonyl transferase activity is Ser676. Residues His959–Ser1088 are N-terminal hotdog fold. The 309-residue stretch at His959–Pro1267 folds into the PKS/mFAS DH domain. His1000 functions as the Proton acceptor; for dehydratase activity in the catalytic mechanism. Residues Asn1105 to Pro1267 form a C-terminal hotdog fold region. Catalysis depends on Asp1177, which acts as the Proton donor; for dehydratase activity. A Carrier domain is found at Ala2524 to Lys2601. O-(pantetheine 4'-phosphoryl)serine is present on Ser2561. The segment at Ala2600–Asn2623 is disordered. Residues Lys2601 to Asn2623 are compositionally biased toward low complexity.

It depends on pantetheine 4'-phosphate as a cofactor.

Functionally, probable polyketide synthase. In Dictyostelium discoideum (Social amoeba), this protein is Probable polyketide synthase 31 (pks31).